The sequence spans 273 residues: Manganese catalase (273 aa).

Glu35 contributes to the Mn(2+) binding site. Asp57 and Asp61 together coordinate Ca(2+). Mn(2+)-binding residues include Glu66, His69, Glu149, and His182. Residues Asn220, Ser222, and Gly224 each coordinate Ca(2+). Positions 254–273 (EKPELKPAPPCVHNTLPGRE) are disordered.

The protein belongs to the manganese catalase family. Homohexamer. Ca(2+) is required as a cofactor. It depends on Mn(2+) as a cofactor.

It catalyses the reaction 2 H2O2 = O2 + 2 H2O. Inhibited in the presence of EDTA. Resistant to inhibition by sodium azide. In terms of biological role, catalyzes the decomposition of hydrogen peroxide into water and oxygen. No significant activity could be detected with any of the other tested substrates, including glutathione, pyrogallol, NADH, NADPH and o-dianisidine. This chain is Manganese catalase, found in Bacillus subtilis.